A 601-amino-acid polypeptide reads, in one-letter code: NADH-ubiquinone oxidoreductase chain 5 (601 aa).

The next 17 helical transmembrane spans lie at 5–25, 37–54, 83–105, 112–129, 134–156, 169–189, 209–231, 240–260, 271–291, 300–320, 323–343, 363–383, 400–420, 451–471, 478–498, 508–528, and 581–601; these read ITSL…TLSF, YMRN…IYID, YCLT…SLWY, TLFF…LFFL, LLQL…NWWH, IIYN…SALF, WLPL…LHPW, TPVS…FLLI, MIIS…ALCA, IIAF…GINQ, LAFL…LCSA, LILP…MGMP, MSYV…LTSI, PLIR…TFFL, FSIP…VSSL, FSHM…AIFH, and NYIT…ALYF.

The protein belongs to the complex I subunit 5 family.

It localises to the mitochondrion inner membrane. The catalysed reaction is a ubiquinone + NADH + 5 H(+)(in) = a ubiquinol + NAD(+) + 4 H(+)(out). Its function is as follows. Core subunit of the mitochondrial membrane respiratory chain NADH dehydrogenase (Complex I) that is believed to belong to the minimal assembly required for catalysis. Complex I functions in the transfer of electrons from NADH to the respiratory chain. The immediate electron acceptor for the enzyme is believed to be ubiquinone. The polypeptide is NADH-ubiquinone oxidoreductase chain 5 (MT-ND5) (Myxine glutinosa (Atlantic hagfish)).